A 469-amino-acid chain; its full sequence is Adenosylhomocysteinase (469 aa).

Positions 63, 139, and 164 each coordinate substrate. Residue 165–167 (TTT) coordinates NAD(+). Substrate-binding residues include K194 and D198. NAD(+) contacts are provided by residues N199, 228 to 233 (GYGDVG), E251, N300, 321 to 323 (IGH), and N375.

It belongs to the adenosylhomocysteinase family. NAD(+) is required as a cofactor.

It localises to the cytoplasm. It carries out the reaction S-adenosyl-L-homocysteine + H2O = L-homocysteine + adenosine. It participates in amino-acid biosynthesis; L-homocysteine biosynthesis; L-homocysteine from S-adenosyl-L-homocysteine: step 1/1. Its function is as follows. May play a key role in the regulation of the intracellular concentration of adenosylhomocysteine. The protein is Adenosylhomocysteinase of Pseudomonas putida (strain GB-1).